The chain runs to 1009 residues: MAAIKALQEWCRQQCEGYRDVSITNMTTSFRDGLAFCAILHRHRPDLINFSALRKENIYENNKLAFQVAEEQLGIPALLDAEDMVALKVPDRLSILTYVSQYYNYFHGRSPIGGMAGIKRPSSDSTEELSGKKGLSQPAKLPSPAQTQRSPLSPARTNPVVQRNEGGSQRPSPKAAPGTAGSSVSSICGVCGKHVHLVQRHLADGRLYHRSCFRCKQCSSTLHSGAYRATGEPGVFVCTHHSSEVTSVSPKSSNLASRKPGGVTADTRPFGVSWTVQEANGEGTPLRVRTAAWEHAGGNTTAKGFVQTELKPPSTSQVHVGSSAGPKLPTITVTTTSVTSKALTHVTNSSPIGWSSPAQSSPANFNSRPVVSPSARNTHLPGSQGQTASKGVKTQLNLNSESSNTAVTPAWTSSASKTQQAREKFFQTPPSAPAPASAPAPAPTSKVPTVVTVPTSKVPNVVTAPTSKVPTVVTVPTSKVPTVVSAPTSKVPTVVSAPTSKVPTVVNSTNSRVTTVVNAPTSKVPTVVSATNGRVPTVVTAHTGRVPAVMNTSASKVSPVVDAPAQESSREQALSVLRKALPALTGSGTQAPNRSFPATSSVLVTLPKNEVPQKVPSDKLSALTTQTPNFTIKLEPSAPVNVGNTAVFLQAGKKSPSISPRVGKTSVGSRPQAEVAGVKGPGPISQEGQEEGPEGWRARLKPVDKKTPAGRSLEQKEPVLAEPRIGDTSRKASSSSDSSVHITLTSIQHKRKPCPAGSGPSPAALSPSPSHRKKLAVPPSLDVSADWLQPEPKKQEDGTRSCKEEKSPTRWSRERSAVLDSGLAPPGEAVTSPVRLHPDYIPQEELQRQLQDIESQLDALELRGVELEKRLRAAEGDASEDSLMVDWFRLIHEKQLLLRLESELMYKSKDQRLEEQQLDLQGELRRLMDKPEGLKSPQDRQREQELLSQYVNTVNDRSDIVDFLDEDRLREQEEDQMLENMIQNLGLQRKKSKSFLSKIWSSKSKSGQA.

A Calponin-homology (CH) domain is found at 1-107 (MAAIKALQEW…YVSQYYNYFH (107 aa)). Residues 1-260 (MAAIKALQEW…KSSNLASRKP (260 aa)) form a forms an intramolecular interaction with the C-terminal coiled coil domain keeping the protein in a closed conformation region. Residues Ser-110, Ser-143, and Ser-153 each carry the phosphoserine modification. Disordered regions lie at residues 114 to 180 (GMAG…PGTA), 247 to 268 (SVSP…ADTR), 348 to 447 (NSSP…TSKV), and 655 to 834 (SPSI…TSPV). Polar residues predominate over residues 144–171 (PAQTQRSPLSPARTNPVVQRNEGGSQRP). Residues 186–248 (SICGVCGKHV…THHSSEVTSV (63 aa)) form the LIM zinc-binding domain. Residue Ser-249 is modified to Phosphoserine. The segment at 261–393 (GGVTADTRPF…QGQTASKGVK (133 aa)) is necessary and sufficient for interaction with actinins. The mediates targeting to the cell plasma membrane stretch occupies residues 261–805 (GGVTADTRPF…EDGTRSCKEE (545 aa)). Residues 348-419 (NSSPIGWSSP…AWTSSASKTQ (72 aa)) are compositionally biased toward polar residues. Residues 430–442 (PSAPAPASAPAPA) are compositionally biased toward pro residues. Basic and acidic residues predominate over residues 694 to 730 (EGWRARLKPVDKKTPAGRSLEQKEPVLAEPRIGDTSR). Low complexity-rich tracts occupy residues 731-746 (KASS…TLTS) and 755-769 (PAGS…SPSP). Residues Ser-766 and Ser-768 each carry the phosphoserine modification. Basic and acidic residues predominate over residues 791-817 (EPKKQEDGTRSCKEEKSPTRWSRERSA). The interval 806-913 (KSPTRWSRER…LMYKSKDQRL (108 aa)) is forms an intramolecular interaction with the N-terminal Calponin-homology and LIM zinc-binding domains-containing region keeping the protein in a closed conformation. Ser-832 carries the phosphoserine modification. Residues 833-980 (PVRLHPDYIP…EQEEDQMLEN (148 aa)) enclose the bMERB domain. Residues 841-880 (IPQEELQRQLQDIESQLDALELRGVELEKRLRAAEGDASE) adopt a coiled-coil conformation. Residues 913–1009 (LEEQQLDLQG…WSSKSKSGQA (97 aa)) form a mediates interaction with RAB13 and is required for transition from the closed to the open conformation region.

Interacts with RAB13 (GTP-bound form); competes with RAB8A and is involved in tight junctions assembly. Interacts with RAB8A; competes with RAB13 and is involved in E-cadherin endocytic recycling. Interacts with RAB8B. Interacts (preferentially in opened conformation) with ACTN1 and ACTN4; stimulated by RAB13 activation. Interacts (via calponin-homology (CH) domain) with the filamins FLNA, FLNB and FLNC (via actin-binding domain). Detected in brain, lung, liver and kidney (at protein level).

Its subcellular location is the cell membrane. The protein resides in the cell junction. The protein localises to the tight junction. It is found in the recycling endosome. It localises to the cell projection. Its subcellular location is the neuron projection. The protein resides in the cytoplasm. The protein localises to the cytoskeleton. In terms of biological role, effector of small Rab GTPases RAB8A and RAB13 which is involved in junctional complexes assembly through the regulation of cell adhesion molecules transport to the plasma membrane and actin cytoskeleton reorganization. Regulates the endocytic recycling of occludins, claudins and E-cadherin to the plasma membrane and may thereby regulate the establishment of tight junctions and adherens junctions. In parallel, may regulate actin cytoskeleton reorganization directly through interaction with F-actin or indirectly through actinins and filamins. Undergoes liquid-liquid phase separation to form tubular recycling endosomes. Plays 2 sequential roles in the biogenesis of tubular recycling endosomes: first organizes phase separation and then the closed form formed by interaction with RAB8A promotes endosomal tubulation. The chain is MICAL-like protein 2 (Micall2) from Mus musculus (Mouse).